The primary structure comprises 257 residues: ABC transporter ATP-binding protein YxdL (257 aa).

The 239-residue stretch at 5–243 folds into the ABC transporter domain; sequence LEVKHINKTY…FYEQILDVLS (239 aa). Residue 40 to 47 participates in ATP binding; that stretch reads GPSGSGKT.

Belongs to the ABC transporter superfamily. As to quaternary structure, the complex is composed of two ATP-binding proteins (YxdL) and two transmembrane proteins (YxdM).

Its function is as follows. Part of the ABC transporter complex YxdLM which could be involved in peptide resistance. Responsible for energy coupling to the transport system. This chain is ABC transporter ATP-binding protein YxdL (yxdL), found in Bacillus subtilis (strain 168).